The primary structure comprises 409 residues: Bone morphogenetic protein 4 (409 aa).

Positions 1 to 19 (MIPGNRMLMVVLLCQVLLG) are cleaved as a signal peptide. The propeptide occupies 20–293 (GASHASLIPE…ALTRRRRAKR (274 aa)). Serine 91 carries the post-translational modification Phosphoserine. 2 N-linked (GlcNAc...) asparagine glycosylation sites follow: asparagine 144 and asparagine 209. A disordered region spans residues 284-308 (ALTRRRRAKRSPKHHPQRARKKNKN). Intrachain disulfides connect cysteine 309-cysteine 374, cysteine 338-cysteine 406, and cysteine 342-cysteine 408. Asparagine 351 and asparagine 366 each carry an N-linked (GlcNAc...) asparagine glycan.

It belongs to the TGF-beta family. Homodimer; disulfide-linked. Interacts with GREM2. Part of a complex consisting of TWSG1 and CHRD. Interacts with the serine proteases, HTRA1 and HTRA3; the interaction with either inhibits BMP4-mediated signaling. The HTRA protease activity is required for this inhibition. Interacts with SOSTDC1. Interacts with FBN1 (via N-terminal domain) and FBN2. Interacts with type I receptor BMPR1A. Interacts with type II receptor BMPR2. Interacts with FSTL1; this interaction inhibits the activation of the BMP4/Smad1/5/8 signaling pathway. Interacts with TGFBR3.

It localises to the secreted. The protein localises to the extracellular space. Its subcellular location is the extracellular matrix. Growth factor of the TGF-beta superfamily that plays essential roles in many developmental processes, including neurogenesis, vascular development, angiogenesis and osteogenesis. Acts in concert with PTHLH/PTHRP to stimulate ductal outgrowth during embryonic mammary development and to inhibit hair follicle induction. Initiates the canonical BMP signaling cascade by associating with type I receptor BMPR1A and type II receptor BMPR2. Once all three components are bound together in a complex at the cell surface, BMPR2 phosphorylates and activates BMPR1A. In turn, BMPR1A propagates signal by phosphorylating SMAD1/5/8 that travel to the nucleus and act as activators and repressors of transcription of target genes. Positively regulates the expression of odontogenic development regulator MSX1 via inducing the IPO7-mediated import of SMAD1 to the nucleus. Required for MSX1-mediated mesenchymal molar tooth bud development beyond the bud stage, via promoting Wnt signaling. Acts as a positive regulator of odontoblast differentiation during mesenchymal tooth germ formation, expression is repressed during the bell stage by MSX1-mediated inhibition of CTNNB1 signaling. Able to induce its own expression in dental mesenchymal cells and also in the neighboring dental epithelial cells via an MSX1-mediated pathway. Can also signal through non-canonical BMP pathways such as ERK/MAP kinase, PI3K/Akt, or SRC cascades. For example, induces SRC phosphorylation which, in turn, activates VEGFR2, leading to an angiogenic response. The protein is Bone morphogenetic protein 4 of Suncus murinus (Asian house shrew).